The primary structure comprises 655 residues: Acetyl-coenzyme A synthetase (655 aa).

CoA is bound by residues 196 to 199 (RGGK) and T316. ATP-binding positions include 392–394 (GEP), 416–421 (DTWWQT), D507, and R522. S530 is a binding site for CoA. Residue R533 coordinates ATP. Mg(2+) is bound by residues V544 and V549. The residue at position 619 (K619) is an N6-acetyllysine.

Belongs to the ATP-dependent AMP-binding enzyme family. The cofactor is Mg(2+). In terms of processing, acetylated. Deacetylation by the SIR2-homolog deacetylase activates the enzyme.

The enzyme catalyses acetate + ATP + CoA = acetyl-CoA + AMP + diphosphate. In terms of biological role, catalyzes the conversion of acetate into acetyl-CoA (AcCoA), an essential intermediate at the junction of anabolic and catabolic pathways. AcsA undergoes a two-step reaction. In the first half reaction, AcsA combines acetate with ATP to form acetyl-adenylate (AcAMP) intermediate. In the second half reaction, it can then transfer the acetyl group from AcAMP to the sulfhydryl group of CoA, forming the product AcCoA. The sequence is that of Acetyl-coenzyme A synthetase from Thiobacillus denitrificans (strain ATCC 25259 / T1).